A 150-amino-acid chain; its full sequence is Phosphopantetheine adenylyltransferase (150 aa).

S10 is a substrate binding site. ATP is bound by residues 10–11 (SF) and H18. Substrate contacts are provided by K42, T74, and R88. Residues 89–91 (GLR), E99, and 124–130 (LAYISSS) contribute to the ATP site.

The protein belongs to the bacterial CoaD family. As to quaternary structure, homohexamer. Requires Mg(2+) as cofactor.

It is found in the cytoplasm. It carries out the reaction (R)-4'-phosphopantetheine + ATP + H(+) = 3'-dephospho-CoA + diphosphate. Its pathway is cofactor biosynthesis; coenzyme A biosynthesis; CoA from (R)-pantothenate: step 4/5. Reversibly transfers an adenylyl group from ATP to 4'-phosphopantetheine, yielding dephospho-CoA (dPCoA) and pyrophosphate. In Cytophaga hutchinsonii (strain ATCC 33406 / DSM 1761 / CIP 103989 / NBRC 15051 / NCIMB 9469 / D465), this protein is Phosphopantetheine adenylyltransferase.